A 275-amino-acid chain; its full sequence is Diaminopimelate epimerase (275 aa).

3 residues coordinate substrate: N12, Q45, and N65. Catalysis depends on C74, which acts as the Proton donor. Residues 75–76 (GN), N158, N191, and 209–210 (ER) contribute to the substrate site. C218 serves as the catalytic Proton acceptor. A substrate-binding site is contributed by 219–220 (GT).

Belongs to the diaminopimelate epimerase family. As to quaternary structure, homodimer.

Its subcellular location is the cytoplasm. The enzyme catalyses (2S,6S)-2,6-diaminopimelate = meso-2,6-diaminopimelate. It functions in the pathway amino-acid biosynthesis; L-lysine biosynthesis via DAP pathway; DL-2,6-diaminopimelate from LL-2,6-diaminopimelate: step 1/1. Functionally, catalyzes the stereoinversion of LL-2,6-diaminopimelate (L,L-DAP) to meso-diaminopimelate (meso-DAP), a precursor of L-lysine and an essential component of the bacterial peptidoglycan. In Shewanella sp. (strain MR-4), this protein is Diaminopimelate epimerase.